Here is a 191-residue protein sequence, read N- to C-terminus: Adenylate kinase (191 aa).

12-17 (GSGKTT) contributes to the ATP binding site. An NMP region spans residues 34 to 63 (STGDLLRAESAKKTERGLLIEKFTSQGELV). AMP is bound by residues Thr35, Arg40, 61–63 (ELV), 88–91 (GYPR), and Gln95. The interval 130–136 (GRSRGAD) is LID. Arg131 is a binding site for ATP. Positions 133 and 145 each coordinate AMP. Arg173 is an ATP binding site.

The protein belongs to the adenylate kinase family. Monomer.

It is found in the cytoplasm. The enzyme catalyses AMP + ATP = 2 ADP. Its pathway is purine metabolism; AMP biosynthesis via salvage pathway; AMP from ADP: step 1/1. Functionally, catalyzes the reversible transfer of the terminal phosphate group between ATP and AMP. Plays an important role in cellular energy homeostasis and in adenine nucleotide metabolism. This chain is Adenylate kinase, found in Helicobacter pylori (strain ATCC 700392 / 26695) (Campylobacter pylori).